A 116-amino-acid polypeptide reads, in one-letter code: Putative iron-sulfur cluster insertion protein ErpA (116 aa).

Positions 44, 108, and 110 each coordinate iron-sulfur cluster.

It belongs to the HesB/IscA family. In terms of assembly, homodimer. Iron-sulfur cluster is required as a cofactor.

Required for insertion of 4Fe-4S clusters. The protein is Putative iron-sulfur cluster insertion protein ErpA of Janthinobacterium sp. (strain Marseille) (Minibacterium massiliensis).